The chain runs to 361 residues: Mitochondrial import receptor subunit TOM40 homolog (361 aa).

Residues 1–10 (MGNVLAASSP) are compositionally biased toward low complexity. The segment at 1-71 (MGNVLAASSP…TASASGAAED (71 aa)) is disordered. Residues 11 to 36 (PAGPPPPPAPALVGLPPPPPSPPGFT) are compositionally biased toward pro residues. Composition is skewed to low complexity over residues 37–52 (LPPLGGSLGAGTSTSR) and 59–71 (GAATASASGAAED).

This sequence belongs to the Tom40 family. In terms of assembly, forms part of the preprotein translocase complex of the outer mitochondrial membrane (TOM complex) which consists of at least 7 different proteins (TOMM5, TOMM6, TOMM7, TOMM20, TOMM22, TOMM40 and TOMM70). Interacts with mitochondrial targeting sequences. Interacts with TIMM29; linking the TIM22 complex to the TOM complex. Forms a complex with BCAP31 (via C-terminus) which mediates the translocation of components of the mitochondrial membrane respiratory chain NADH dehydrogenase (Complex I) from the cytosol to the mitochondria. Interacts (via N-terminus) with CYP1A1 (via mitochondrial targeting signal); this interaction is required for CYP1A1 translocation across the mitochondrial outer membrane.

It is found in the mitochondrion outer membrane. Its function is as follows. Channel-forming protein essential for import of protein precursors into mitochondria. Plays a role in the assembly of the mitochondrial membrane respiratory chain NADH dehydrogenase (Complex I) by forming a complex with BCAP31 and mediating the translocation of Complex I components from the cytosol to the mitochondria. This Homo sapiens (Human) protein is Mitochondrial import receptor subunit TOM40 homolog (TOMM40).